The primary structure comprises 25 residues: Caerin 1.1 (25 aa).

A Leucine amide modification is found at Leu25.

In terms of tissue distribution, expressed by the skin dorsal glands.

Its subcellular location is the secreted. In terms of biological role, antibacterial peptide with wide spectrum of activity. Active against the Gram-positive bacteria B.cereus (MIC=50 ug/ml), E.faecalis (MIC=25 ug/ml), L.lactis (MIC=1.5 ug/ml), L.innocua (MIC=25 ug/ml), S.aureus (MIC=3 ug/ml), S.epidermidis (MIC=12 ug/ml) and S.uberis (MIC=12 ug/ml), and against the Gram-negative bacteria E.coli (MIC=100 ug/ml) and P.multocida (MIC=25 ug/ml). The polypeptide is Caerin 1.1 (Litoria peronii (Emerald spotted tree frog)).